The primary structure comprises 119 residues: Large ribosomal subunit protein bL20 (119 aa).

Belongs to the bacterial ribosomal protein bL20 family.

In terms of biological role, binds directly to 23S ribosomal RNA and is necessary for the in vitro assembly process of the 50S ribosomal subunit. It is not involved in the protein synthesizing functions of that subunit. This Shewanella halifaxensis (strain HAW-EB4) protein is Large ribosomal subunit protein bL20.